The following is a 977-amino-acid chain: Synaptonemal complex protein 2-like (977 aa).

Disordered regions lie at residues 447 to 474 (LGSQ…LSNA), 574 to 593 (QSTE…NSPL), 642 to 728 (RNKS…QDIM), and 804 to 824 (TEKN…VFYS). A compositionally biased stretch (low complexity) spans 449 to 462 (SQTSEHSSTTKTSS). Residues 463 to 474 (ANRSVQKSLSNA) show a composition bias toward polar residues. The span at 674-693 (SRKEMHRPEDINPKSPHSAE) shows a compositional bias: basic and acidic residues.

This sequence belongs to the SYCP2 family. Ubiquitinated and gradually degraded by the proteasome during oocyte maturation. Post-translationally, phosphorylated in maturing oocytes, before its degradation. As to expression, expressed in immature oocytes (at protein level). Expressed in the ovary.

It localises to the nucleus. It is found in the chromosome. The protein resides in the centromere. Its subcellular location is the nucleolus. Oocyte-specific protein that localizes to centromeres at the dictyate stage and regulates the survival of primordial oocytes. This is Synaptonemal complex protein 2-like (sycp2l) from Xenopus laevis (African clawed frog).